The following is a 224-amino-acid chain: Putative homeobox protein R749 (224 aa).

The disordered stretch occupies residues 139–162; it reads KTKTIKKSTSEKKTSPKKKTTSQQ. Residues 161-220 constitute a DNA-binding region (homeobox); sequence QQIKRVRLSDEERNILESQYSKNNFPSPEIRDELAKKIGKTPRQVQIWFQNKRCKDRKNL.

It localises to the host nucleus. The sequence is that of Putative homeobox protein R749 from Acanthamoeba polyphaga mimivirus (APMV).